A 365-amino-acid chain; its full sequence is Zinc transporter 7 (365 aa).

Positions 1-26 (MAYSKACYKLTTITILLLSFTLPSLA) are cleaved as a signal peptide. Topologically, residues 27–56 (GNAENADVSECKAESGDLSCHNNKEAQKLK) are extracellular. The helical transmembrane segment at 57–77 (IIAIPSILVASMIGVSLPLFS) threads the bilayer. Topologically, residues 78–90 (RSIPALGPDREMS) are cytoplasmic. Residues 91–111 (VIVKTLASGVILATGFMHVLP) form a helical membrane-spanning segment. Residues 112 to 129 (DSFDDLTSKCLPEDPWQK) lie on the Extracellular side of the membrane. The helical transmembrane segment at 130-150 (FPFATFITMISALLVLMIESF) threads the bilayer. The Cytoplasmic segment spans residues 151-210 (AMCAYARRTSKREGEVVPLENGSNSVDTQNDIQTLENGSSYVEKQEKVNEDKTSELLRNK). The chain crosses the membrane as a helical span at residues 211-231 (VIAQILELGIVVHSVVIGLAM). The Extracellular portion of the chain corresponds to 232-242 (GASDNKCTVQS). The helical transmembrane segment at 243 to 263 (LIAALCFHQLFEGMGLGGSIL) threads the bilayer. Residues 264 to 272 (QAQFKSKTN) are Cytoplasmic-facing. The chain crosses the membrane as a helical span at residues 273 to 293 (WTMVFFFSVTTPFGIVLGMAI). The Extracellular portion of the chain corresponds to 294–304 (QKIYDETSPTA). Residues 305-325 (LIVVGVLNACSAGLLIYMALV) form a helical membrane-spanning segment. Residues 326 to 344 (NLLAHEFFGPKIQGNIKLH) are Cytoplasmic-facing. The helical transmembrane segment at 345 to 365 (VLGYVATFTGAAGMSLMAKWA) threads the bilayer.

It belongs to the ZIP transporter (TC 2.A.5) family.

It is found in the cell membrane. Probably mediates zinc uptake from the rhizosphere. The sequence is that of Zinc transporter 7 (ZIP7) from Arabidopsis thaliana (Mouse-ear cress).